A 209-amino-acid chain; its full sequence is Orotate phosphoribosyltransferase (209 aa).

5-phospho-alpha-D-ribose 1-diphosphate-binding positions include R96, K100, H102, and 122 to 130 (EDLISTGGS). Residue S126 participates in orotate binding.

This sequence belongs to the purine/pyrimidine phosphoribosyltransferase family. PyrE subfamily. Homodimer. The cofactor is Mg(2+).

It carries out the reaction orotidine 5'-phosphate + diphosphate = orotate + 5-phospho-alpha-D-ribose 1-diphosphate. The protein operates within pyrimidine metabolism; UMP biosynthesis via de novo pathway; UMP from orotate: step 1/2. In terms of biological role, catalyzes the transfer of a ribosyl phosphate group from 5-phosphoribose 1-diphosphate to orotate, leading to the formation of orotidine monophosphate (OMP). The chain is Orotate phosphoribosyltransferase from Streptococcus agalactiae serotype Ia (strain ATCC 27591 / A909 / CDC SS700).